Consider the following 873-residue polypeptide: Zinc fingers and homeoboxes protein 1 (873 aa).

Residues 24–63 (LISDLDEGPPVLTPVENTRAESISSDEEVHESVDSDNQQN) form a disordered region. Position 36 is a phosphothreonine (T36). 3 positions are modified to phosphoserine: S45, S47, and S48. C2H2-type zinc fingers lie at residues 70–93 (YECKYCTFQTPDLNMFTFHVDSEH) and 102–125 (YVCVECNFLTKRYDALSEHNLKYH). A Glycyl lysine isopeptide (Lys-Gly) (interchain with G-Cter in SUMO2) cross-link involves residue K159. S202 bears the Phosphoserine mark. The disordered stretch occupies residues 202–236 (SVEDVPEEKENEIKPDREEIVENPSSSASESNTST). A compositionally biased stretch (basic and acidic residues) spans 212–221 (NEIKPDREEI). Low complexity predominate over residues 223-236 (ENPSSSASESNTST). A required for dimerization region spans residues 272–432 (NSNLIPKVLI…QNNIQKSQVP (161 aa)). Residues 272-564 (NSNLIPKVLI…AQPKQSWNPF (293 aa)) are required for interaction with NFYA. A DNA-binding region (homeobox 1) is located at residues 284–346 (NSIPTYNAAL…LKHGVSWTPE (63 aa)). Glycyl lysine isopeptide (Lys-Gly) (interchain with G-Cter in SUMO2) cross-links involve residues K441, K454, K485, and K629. DNA-binding regions (homeobox) lie at residues 464-526 (SFGI…KSNQ) and 569-630 (PQKF…EEKM). 2 disordered regions span residues 626–667 (KEEK…ICKK) and 732–770 (SSMNGLSSLRKRGRGRPKGRGRGRPRGRPRGSKRINNWD). S648 is modified (phosphoserine). The segment at residues 660–722 (STGKICKKTP…YAWKNGNLKW (63 aa)) is a DNA-binding region (homeobox 4). Positions 734–768 (MNGLSSLRKRGRGRPKGRGRGRPRGRPRGSKRINN) are required for nuclear localization. Basic residues predominate over residues 740–764 (LRKRGRGRPKGRGRGRPRGRPRGSK). At S774 the chain carries Phosphoserine. Positions 777 to 832 (KFKTGTAILKDYYLKHKFLNEQDLDELVNKSHMGYEQVREWFAERQRRSELGIELF) form a DNA-binding region, homeobox 5. Positions 829–873 (IELFEENEEEDEVIDDQEEDEEETDDSDTWEPPRHVKRKLSKSDD) are disordered. Residues 831–857 (LFEENEEEDEVIDDQEEDEEETDDSDT) show a composition bias toward acidic residues. Residues 831–873 (LFEENEEEDEVIDDQEEDEEETDDSDTWEPPRHVKRKLSKSDD) are required for repressor activity. Basic residues predominate over residues 863–873 (HVKRKLSKSDD).

It belongs to the ZHX family. As to quaternary structure, forms homodimers. Heterodimer (via HD1 domain) with ZHX2 (via HD1 domain). Also forms a heterodimer with ZHX3 which is a prerequisite for repressor activity. Interacts with ATF7IP and NFYA. Interacts (via homeobox domains) with DNMT3B (via PWWP domain). In terms of tissue distribution, ubiquitously expressed. Expressed in podocytes.

It is found in the nucleus. Functionally, acts as a transcriptional repressor. Increases DNMT3B-mediated repressive transcriptional activity when DNMT3B is tethered to DNA. May link molecule between DNMT3B and other co-repressor proteins. This Homo sapiens (Human) protein is Zinc fingers and homeoboxes protein 1 (ZHX1).